Here is a 1661-residue protein sequence, read N- to C-terminus: Beta/gamma crystallin domain-containing protein 2 (1661 aa).

Disordered stretches follow at residues Glu72 to Val135, Pro148 to Ser168, Val242 to Ser268, Pro297 to Pro321, Ser337 to Gly380, Glu411 to Glu757, Leu808 to Ser871, and Thr883 to Arg903. The span at Pro105 to Val118 shows a compositional bias: basic and acidic residues. Residues Ser337 to Ser353 are compositionally biased toward polar residues. Over residues Pro431–Pro442 the composition is skewed to low complexity. Composition is skewed to polar residues over residues Ser507–Ser519, Pro628–Gln644, and Ser685–Glu697. A compositionally biased stretch (low complexity) spans Pro706–Pro719. Polar residues predominate over residues Glu731–Glu750. Positions Glu825 to Glu835 are enriched in acidic residues. Residues Asp841–Lys851 show a composition bias toward basic and acidic residues. 12 Beta/gamma crystallin 'Greek key' domains span residues Gly986–Arg1023, Gly1024–Val1067, Pro1073–Ala1113, Gly1114–Arg1156, Pro1168–Gly1213, Gly1214–Arg1256, Pro1262–Ser1302, Gly1303–Leu1345, Ser1356–Gly1393, Gly1394–Ser1437, Pro1443–Gly1483, and Gly1484–Lys1525. The 91-residue stretch at Trp1569–His1659 folds into the Ricin B-type lectin domain.

Belongs to the beta/gamma-crystallin family.

The sequence is that of Beta/gamma crystallin domain-containing protein 2 from Homo sapiens (Human).